The sequence spans 146 residues: D-aminoacyl-tRNA deacylase (146 aa).

Positions 137-138 (GP) match the Gly-cisPro motif, important for rejection of L-amino acids motif.

It belongs to the DTD family. In terms of assembly, homodimer.

The protein localises to the cytoplasm. The enzyme catalyses glycyl-tRNA(Ala) + H2O = tRNA(Ala) + glycine + H(+). It catalyses the reaction a D-aminoacyl-tRNA + H2O = a tRNA + a D-alpha-amino acid + H(+). Functionally, an aminoacyl-tRNA editing enzyme that deacylates mischarged D-aminoacyl-tRNAs. Also deacylates mischarged glycyl-tRNA(Ala), protecting cells against glycine mischarging by AlaRS. Acts via tRNA-based rather than protein-based catalysis; rejects L-amino acids rather than detecting D-amino acids in the active site. By recycling D-aminoacyl-tRNA to D-amino acids and free tRNA molecules, this enzyme counteracts the toxicity associated with the formation of D-aminoacyl-tRNA entities in vivo and helps enforce protein L-homochirality. The polypeptide is D-aminoacyl-tRNA deacylase (Bacillus thuringiensis subsp. konkukian (strain 97-27)).